The chain runs to 417 residues: NADH-quinone oxidoreductase subunit D (417 aa).

It belongs to the complex I 49 kDa subunit family. In terms of assembly, NDH-1 is composed of 14 different subunits. Subunits NuoB, C, D, E, F, and G constitute the peripheral sector of the complex.

Its subcellular location is the cell inner membrane. It catalyses the reaction a quinone + NADH + 5 H(+)(in) = a quinol + NAD(+) + 4 H(+)(out). Its function is as follows. NDH-1 shuttles electrons from NADH, via FMN and iron-sulfur (Fe-S) centers, to quinones in the respiratory chain. The immediate electron acceptor for the enzyme in this species is believed to be ubiquinone. Couples the redox reaction to proton translocation (for every two electrons transferred, four hydrogen ions are translocated across the cytoplasmic membrane), and thus conserves the redox energy in a proton gradient. This is NADH-quinone oxidoreductase subunit D from Burkholderia cenocepacia (strain HI2424).